Consider the following 71-residue polypeptide: UPF0337 protein RPA4418 (71 aa).

Residues 1 to 54 (MGSTMDKIKGQANELAGKAKQGIGEATGSDKLKGEGAIQEAKGHGQQALGNAKD) form a disordered region.

The protein belongs to the UPF0337 (CsbD) family.

This Rhodopseudomonas palustris (strain ATCC BAA-98 / CGA009) protein is UPF0337 protein RPA4418.